The sequence spans 581 residues: Ezrin (581 aa).

The 294-residue stretch at 2–295 (PKPINVRVTT…GNHELYMRRR (294 aa)) folds into the FERM domain. Lysine 60 is modified (N6-acetyllysine). A [IL]-x-C-x-x-[DE] motif motif is present at residues 115-120 (IYCPPE). Phosphotyrosine; by PDGFR is present on tyrosine 146. The segment at 244–581 (EIRNISFNDK…KQRIDEFEAM (338 aa)) is interaction with SCYL3. The stretch at 302–462 (VQQMKAQARE…QDDLVKTREE (161 aa)) forms a coiled coil. Positions 306 to 341 (KAQAREEKHQKQLERQQLETEKKRRETVEREKEQMM) are disordered. A compositionally biased stretch (basic and acidic residues) spans 308–341 (QAREEKHQKQLERQQLETEKKRRETVEREKEQMM). A Phosphotyrosine; by PDGFR modification is found at tyrosine 354. A Phosphoserine modification is found at serine 366. Position 476 is a phosphotyrosine (tyrosine 476). The interval 534 to 560 (SQARDENKRTHNDIIHNENMRQGRDKY) is disordered. Basic and acidic residues predominate over residues 535–560 (QARDENKRTHNDIIHNENMRQGRDKY). Threonine 562 carries the post-translational modification Phosphothreonine; by ROCK2 and PKC/PRKCI.

As to quaternary structure, interacts with PALS1 and NHERF2. Found in a complex with EZR, PODXL and NHERF2. Interacts with MCC, PLEKHG6, PODXL, SCYL3/PACE1, NHERF1 and TMEM8B. Interacts (when phosphorylated) with FES/FPS. Interacts with dimeric S100P, the interaction may be activating through unmasking of F-actin binding sites. Identified in complexes that contain VIM, EZR, AHNAK, BFSP1, BFSP2, ANK2, PLEC, PRX and spectrin. Detected in a complex composed of at least EZR, AHNAK, PPL and PRX. Interacts with PDPN (via cytoplasmic domain); activates RHOA and promotes epithelial-mesenchymal transition. Interacts with SPN/CD43 cytoplasmic tail, CD44 and ICAM2. Interacts with SLC9A3; interaction targets SLC9A3 to the apical membrane. Interacts with SLC9A1; regulates interactions of SLC9A1 with cytoskeletal and promotes stress fiber formation. Interacts with CLIC5; may work together in a complex which also includes RDX and MYO6 to stabilize linkages between the plasma membrane and subjacent actin cytoskeleton at the base of stereocilia. Post-translationally, phosphorylated by tyrosine-protein kinases. Phosphorylation by ROCK2 suppresses the head-to-tail association of the N-terminal and C-terminal halves resulting in an opened conformation which is capable of actin and membrane-binding. In terms of processing, S-nitrosylation is induced by interferon-gamma and oxidatively-modified low-densitity lipoprotein (LDL(ox)) possibly implicating the iNOS-S100A8/9 transnitrosylase complex. As to expression, detected in eye lens fiber cells (at protein level).

It is found in the apical cell membrane. It localises to the cell projection. The protein localises to the microvillus membrane. Its subcellular location is the ruffle membrane. The protein resides in the cytoplasm. It is found in the cell cortex. It localises to the cytoskeleton. The protein localises to the microvillus. A head-to-tail association, of the N-terminal and C-terminal halves results in a closed conformation (inactive form) which is incapable of actin or membrane-binding. In terms of biological role, probably involved in connections of major cytoskeletal structures to the plasma membrane. In epithelial cells, required for the formation of microvilli and membrane ruffles on the apical pole. Along with PLEKHG6, required for normal macropinocytosis. The sequence is that of Ezrin (EZR) from Bos taurus (Bovine).